The primary structure comprises 43 residues: Potassium channel toxin gamma-KTx 4.12 (43 aa).

Disulfide bonds link Cys-5-Cys-23, Cys-11-Cys-34, Cys-20-Cys-39, and Cys-24-Cys-41.

As to expression, expressed by the venom gland.

The protein resides in the secreted. Reversibly blocks Kv11/ERG potassium channels. Is less toxic than ergtoxin (AC Q86QT3). In Centruroides sculpturatus (Arizona bark scorpion), this protein is Potassium channel toxin gamma-KTx 4.12.